We begin with the raw amino-acid sequence, 488 residues long: Proline--tRNA ligase (488 aa).

It belongs to the class-II aminoacyl-tRNA synthetase family. ProS type 3 subfamily. In terms of assembly, homodimer.

The protein localises to the cytoplasm. It catalyses the reaction tRNA(Pro) + L-proline + ATP = L-prolyl-tRNA(Pro) + AMP + diphosphate. Functionally, catalyzes the attachment of proline to tRNA(Pro) in a two-step reaction: proline is first activated by ATP to form Pro-AMP and then transferred to the acceptor end of tRNA(Pro). The protein is Proline--tRNA ligase of Borreliella afzelii (strain PKo) (Borrelia afzelii).